An 878-amino-acid chain; its full sequence is Aminopeptidase M1-A (878 aa).

Residues 105-212 (VGEGTLVIAF…MSTYLVAVIV (108 aa)) form a required for membrane association region. Residues Glu145 and 278 to 282 (GAMEN) each bind substrate. A Zn(2+)-binding site is contributed by His314. Glu315 acts as the Proton acceptor in catalysis. Zn(2+)-binding residues include His318 and Glu337. The Dileucine internalization motif signature appears at 727–728 (LL).

It belongs to the peptidase M1 family. In terms of assembly, homodimer. It depends on Zn(2+) as a cofactor.

The protein resides in the membrane. It localises to the microsome membrane. Its subcellular location is the cytoplasm. The catalysed reaction is Release of an N-terminal amino acid, Xaa-|-Yaa- from a peptide, amide or arylamide. Xaa is preferably Ala, but may be most amino acids including Pro (slow action). When a terminal hydrophobic residue is followed by a prolyl residue, the two may be released as an intact Xaa-Pro dipeptide.. In Oryza sativa subsp. japonica (Rice), this protein is Aminopeptidase M1-A.